A 73-amino-acid polypeptide reads, in one-letter code: Antitoxin VapB2 (73 aa).

Forms a homodimer, which binds to a toxin homodimer, which then oligomerizes further to a hetero-octamer. When bound to toxin VapC2 the toxin activity is inhibited; 1 antitoxin may suffice to inhibit toxin.

In terms of biological role, antitoxin component of a type II toxin-antitoxin (TA) system. Upon expression in M.smegmatis neutralizes the effect of cognate toxin VapC2. The C-terminal helix of the antitoxin may obstruct the toxin's RNA-binding groove, blocking access to the active sites. Additionally, the C-terminal arginine of the antitoxin may remove Mg(2+) ions from the toxin active sites. The protein is Antitoxin VapB2 (vapB2) of Mycobacterium tuberculosis (strain ATCC 25618 / H37Rv).